Reading from the N-terminus, the 266-residue chain is 5'-nucleotidase SurE (266 aa).

A divalent metal cation is bound by residues Asp-8, Asp-9, Ser-40, and Asn-98.

The protein belongs to the SurE nucleotidase family. Requires a divalent metal cation as cofactor.

The protein resides in the cytoplasm. The catalysed reaction is a ribonucleoside 5'-phosphate + H2O = a ribonucleoside + phosphate. Nucleotidase that shows phosphatase activity on nucleoside 5'-monophosphates. The sequence is that of 5'-nucleotidase SurE from Parasynechococcus marenigrum (strain WH8102).